The chain runs to 311 residues: MADSIHYELQYLDLMRRIWVDGDERVDRTGVGTRSLFGETMRFSLKDDAIPLLTTKRVYWKTALRELLWFLTGDTNIRPLVAQGVKIWTDWPLEKYRKATGEAISATDFEARIVADADFAAKWGDLGPVYGHQWVNWPRYEPAGGGLFRRADHGYNQIAALIDSLKNNPGSRRHIFTGWNVADLDRMALPPCHMTYQFHVRSDGGLSCLLFQRSCDLGLGFAFNIFEAALLTRMVAEQCGLYAHEVVWTGGDVHLYLNHAELVEQQLARVPEGKPRLRILRRPPSIFEYRFEDFVVEDYAPQAHISAPVAV.

DUMP contacts are provided by residues Arg28 and 172-173 (RR). The Nucleophile role is filled by Cys192. Residues 213 to 216 (RSCD), Asn224, and 254 to 256 (HLY) contribute to the dUMP site. Residue Asp216 coordinates (6R)-5,10-methylene-5,6,7,8-tetrahydrofolate. Ala310 is a binding site for (6R)-5,10-methylene-5,6,7,8-tetrahydrofolate.

This sequence belongs to the thymidylate synthase family. Bacterial-type ThyA subfamily. Homodimer.

The protein localises to the cytoplasm. The catalysed reaction is dUMP + (6R)-5,10-methylene-5,6,7,8-tetrahydrofolate = 7,8-dihydrofolate + dTMP. It participates in pyrimidine metabolism; dTTP biosynthesis. In terms of biological role, catalyzes the reductive methylation of 2'-deoxyuridine-5'-monophosphate (dUMP) to 2'-deoxythymidine-5'-monophosphate (dTMP) while utilizing 5,10-methylenetetrahydrofolate (mTHF) as the methyl donor and reductant in the reaction, yielding dihydrofolate (DHF) as a by-product. This enzymatic reaction provides an intracellular de novo source of dTMP, an essential precursor for DNA biosynthesis. The polypeptide is Thymidylate synthase (Sphingopyxis alaskensis (strain DSM 13593 / LMG 18877 / RB2256) (Sphingomonas alaskensis)).